We begin with the raw amino-acid sequence, 374 residues long: Tryptophan--tRNA ligase (374 aa).

The 'HIGH' region signature appears at 81-89; it reads PSGPVHIGH. The 'KMSKS' region signature appears at 258 to 262; sequence KMSAS.

It belongs to the class-I aminoacyl-tRNA synthetase family.

The protein resides in the cytoplasm. The catalysed reaction is tRNA(Trp) + L-tryptophan + ATP = L-tryptophyl-tRNA(Trp) + AMP + diphosphate + H(+). The chain is Tryptophan--tRNA ligase from Pyrobaculum arsenaticum (strain DSM 13514 / JCM 11321 / PZ6).